We begin with the raw amino-acid sequence, 243 residues long: MDTENKSRADLALPNPQESPSAPDIELLEASPPAKALPEKPASPPPQQTWQSFLKKELEFLGVTQVLVGLICLCFGTVVCSTLQTSDFDDEVLLLYRAGYPFWGAVLFVLSGFLSIMSERKNTLYLVRGSLGANIVSSIAAGLGIAILILNLSNNSAYMNYCKDITEDDGCFVTSFITELVLMLLFLTILAFCSAVLLIIYRIGQEFERSKVPDDRLYEELHVYSPIYSALEDTREASAPVVS.

The segment at 1–48 is disordered; that stretch reads MDTENKSRADLALPNPQESPSAPDIELLEASPPAKALPEKPASPPPQQ. The Cytoplasmic portion of the chain corresponds to 1-59; that stretch reads MDTENKSRADLALPNPQESPSAPDIELLEASPPAKALPEKPASPPPQQTWQSFLKKELE. The helical transmembrane segment at 60–79 threads the bilayer; sequence FLGVTQVLVGLICLCFGTVV. At 80 to 97 the chain is on the extracellular side; it reads CSTLQTSDFDDEVLLLYR. A helical membrane pass occupies residues 98 to 117; that stretch reads AGYPFWGAVLFVLSGFLSIM. The Cytoplasmic portion of the chain corresponds to 118–130; the sequence is SERKNTLYLVRGS. A helical transmembrane segment spans residues 131–150; sequence LGANIVSSIAAGLGIAILIL. Over 151–179 the chain is Extracellular; the sequence is NLSNNSAYMNYCKDITEDDGCFVTSFITE. Residues 180–199 form a helical membrane-spanning segment; sequence LVLMLLFLTILAFCSAVLLI. The Cytoplasmic portion of the chain corresponds to 200–243; sequence IYRIGQEFERSKVPDDRLYEELHVYSPIYSALEDTREASAPVVS. A phosphotyrosine mark is found at Tyr-218 and Tyr-224. Residue Ser-225 is modified to Phosphoserine. Tyr-228 is modified (phosphotyrosine).

It belongs to the MS4A family. In terms of assembly, tetramer of an alpha chain, a beta chain, and two disulfide linked gamma chains. Binds LILRB1. Interacts with FES/FPS and LYN. Interacts with FGR. In terms of processing, phosphorylated on tyrosine residues by LYN.

The protein resides in the membrane. In terms of biological role, high affinity receptor that binds to the Fc region of immunoglobulins epsilon. Aggregation of FCER1 by multivalent antigens is required for the full mast cell response, including the release of preformed mediators (such as histamine) by degranulation and de novo production of lipid mediators and cytokines. Also mediates the secretion of important lymphokines. Binding of allergen to receptor-bound IgE leads to cell activation and the release of mediators responsible for the manifestations of allergy. The chain is High affinity immunoglobulin epsilon receptor subunit beta (Ms4a2) from Rattus norvegicus (Rat).